Reading from the N-terminus, the 227-residue chain is Cytochrome c oxidase subunit 2 (227 aa).

At 1–14 (MAYPFQLGLQDATS) the chain is on the mitochondrial intermembrane side. Residues 15-45 (PIMEELLHFHDHTLMIVFLISSLVLYIISLM) form a helical membrane-spanning segment. Residues 46–59 (LTTKLTHTSTMDAQ) lie on the Mitochondrial matrix side of the membrane. A helical transmembrane segment spans residues 60-87 (EVETVWTILPAIILILIALPSLRILYMM). The Mitochondrial intermembrane portion of the chain corresponds to 88–227 (DEINNPSLTV…YFETWSAVMV (140 aa)). Cu cation contacts are provided by H161, C196, E198, C200, H204, and M207. E198 is a Mg(2+) binding site. The residue at position 218 (Y218) is a Phosphotyrosine.

The protein belongs to the cytochrome c oxidase subunit 2 family. In terms of assembly, component of the cytochrome c oxidase (complex IV, CIV), a multisubunit enzyme composed of 14 subunits. The complex is composed of a catalytic core of 3 subunits MT-CO1, MT-CO2 and MT-CO3, encoded in the mitochondrial DNA, and 11 supernumerary subunits COX4I, COX5A, COX5B, COX6A, COX6B, COX6C, COX7A, COX7B, COX7C, COX8 and NDUFA4, which are encoded in the nuclear genome. The complex exists as a monomer or a dimer and forms supercomplexes (SCs) in the inner mitochondrial membrane with NADH-ubiquinone oxidoreductase (complex I, CI) and ubiquinol-cytochrome c oxidoreductase (cytochrome b-c1 complex, complex III, CIII), resulting in different assemblies (supercomplex SCI(1)III(2)IV(1) and megacomplex MCI(2)III(2)IV(2)). Found in a complex with TMEM177, COA6, COX18, COX20, SCO1 and SCO2. Interacts with TMEM177 in a COX20-dependent manner. Interacts with COX20. Interacts with COX16. Cu cation serves as cofactor.

The protein resides in the mitochondrion inner membrane. The catalysed reaction is 4 Fe(II)-[cytochrome c] + O2 + 8 H(+)(in) = 4 Fe(III)-[cytochrome c] + 2 H2O + 4 H(+)(out). Its function is as follows. Component of the cytochrome c oxidase, the last enzyme in the mitochondrial electron transport chain which drives oxidative phosphorylation. The respiratory chain contains 3 multisubunit complexes succinate dehydrogenase (complex II, CII), ubiquinol-cytochrome c oxidoreductase (cytochrome b-c1 complex, complex III, CIII) and cytochrome c oxidase (complex IV, CIV), that cooperate to transfer electrons derived from NADH and succinate to molecular oxygen, creating an electrochemical gradient over the inner membrane that drives transmembrane transport and the ATP synthase. Cytochrome c oxidase is the component of the respiratory chain that catalyzes the reduction of oxygen to water. Electrons originating from reduced cytochrome c in the intermembrane space (IMS) are transferred via the dinuclear copper A center (CU(A)) of subunit 2 and heme A of subunit 1 to the active site in subunit 1, a binuclear center (BNC) formed by heme A3 and copper B (CU(B)). The BNC reduces molecular oxygen to 2 water molecules using 4 electrons from cytochrome c in the IMS and 4 protons from the mitochondrial matrix. The sequence is that of Cytochrome c oxidase subunit 2 (MT-CO2) from Lycalopex culpaeus (Culpeo fox).